The sequence spans 164 residues: Phosphopantetheine adenylyltransferase (164 aa).

Serine 11 provides a ligand contact to substrate. ATP is bound by residues 11-12 (SF) and histidine 19. Substrate contacts are provided by lysine 43, alanine 76, and arginine 90. ATP contacts are provided by residues 91-93 (GLR), glutamate 101, and 126-132 (YQHISSS).

Belongs to the bacterial CoaD family. As to quaternary structure, homohexamer. Mg(2+) serves as cofactor.

It localises to the cytoplasm. It carries out the reaction (R)-4'-phosphopantetheine + ATP + H(+) = 3'-dephospho-CoA + diphosphate. Its pathway is cofactor biosynthesis; coenzyme A biosynthesis; CoA from (R)-pantothenate: step 4/5. Its function is as follows. Reversibly transfers an adenylyl group from ATP to 4'-phosphopantetheine, yielding dephospho-CoA (dPCoA) and pyrophosphate. The protein is Phosphopantetheine adenylyltransferase of Streptococcus sanguinis (strain SK36).